The chain runs to 262 residues: Type III pantothenate kinase (262 aa).

9-16 (DAGNSRIK) contacts ATP. Substrate-binding positions include tyrosine 96 and 103–106 (GSDR). Residue aspartate 105 is the Proton acceptor of the active site. Threonine 129 serves as a coordination point for ATP. Threonine 189 serves as a coordination point for substrate.

It belongs to the type III pantothenate kinase family. Homodimer. Requires NH4(+) as cofactor. K(+) is required as a cofactor.

It localises to the cytoplasm. It carries out the reaction (R)-pantothenate + ATP = (R)-4'-phosphopantothenate + ADP + H(+). The protein operates within cofactor biosynthesis; coenzyme A biosynthesis; CoA from (R)-pantothenate: step 1/5. In terms of biological role, catalyzes the phosphorylation of pantothenate (Pan), the first step in CoA biosynthesis. This Burkholderia vietnamiensis (strain G4 / LMG 22486) (Burkholderia cepacia (strain R1808)) protein is Type III pantothenate kinase.